The primary structure comprises 475 residues: Ribulose bisphosphate carboxylase large chain (475 aa).

A propeptide spanning residues 1–2 (MS) is cleaved from the precursor. The residue at position 3 (Pro3) is an N-acetylproline. Lys14 carries the N6,N6,N6-trimethyllysine modification. Substrate-binding residues include Asn123 and Thr173. Catalysis depends on Lys175, which acts as the Proton acceptor. Lys177 serves as a coordination point for substrate. Mg(2+)-binding residues include Lys201, Asp203, and Glu204. Lys201 is modified (N6-carboxylysine). The active-site Proton acceptor is His294. Arg295, His327, and Ser379 together coordinate substrate.

The protein belongs to the RuBisCO large chain family. Type I subfamily. As to quaternary structure, heterohexadecamer of 8 large chains and 8 small chains; disulfide-linked. The disulfide link is formed within the large subunit homodimers. Requires Mg(2+) as cofactor. The disulfide bond which can form in the large chain dimeric partners within the hexadecamer appears to be associated with oxidative stress and protein turnover.

The protein resides in the plastid. Its subcellular location is the chloroplast. The catalysed reaction is 2 (2R)-3-phosphoglycerate + 2 H(+) = D-ribulose 1,5-bisphosphate + CO2 + H2O. It catalyses the reaction D-ribulose 1,5-bisphosphate + O2 = 2-phosphoglycolate + (2R)-3-phosphoglycerate + 2 H(+). Its function is as follows. RuBisCO catalyzes two reactions: the carboxylation of D-ribulose 1,5-bisphosphate, the primary event in carbon dioxide fixation, as well as the oxidative fragmentation of the pentose substrate in the photorespiration process. Both reactions occur simultaneously and in competition at the same active site. This Pinus koraiensis (Korean pine) protein is Ribulose bisphosphate carboxylase large chain.